Reading from the N-terminus, the 180-residue chain is MRARALQHFLRSGGVIAYPTESCFGLGCDPTNHRALKRLLRIKGRPQRKGLIVIAQHFSQLQKLIAPVTPEQKQRMFTRWPGPHTWLVPASRRCPALLRGRHTSLAVRVTANPLAANLCRHAGMALVSTSANHNGRVPAKTARECHRLFGGRVKVLPGRTGGASKPSTIQDLITGAIVRP.

Residues 1-180 (MRARALQHFL…DLITGAIVRP (180 aa)) enclose the YrdC-like domain.

This sequence belongs to the SUA5 family. TsaC subfamily.

The protein resides in the cytoplasm. It carries out the reaction L-threonine + hydrogencarbonate + ATP = L-threonylcarbamoyladenylate + diphosphate + H2O. Its function is as follows. Required for the formation of a threonylcarbamoyl group on adenosine at position 37 (t(6)A37) in tRNAs that read codons beginning with adenine. Catalyzes the conversion of L-threonine, HCO(3)(-)/CO(2) and ATP to give threonylcarbamoyl-AMP (TC-AMP) as the acyladenylate intermediate, with the release of diphosphate. This chain is Threonylcarbamoyl-AMP synthase, found in Methylobacillus flagellatus (strain ATCC 51484 / DSM 6875 / VKM B-1610 / KT).